The sequence spans 491 residues: Nicotinamide phosphoribosyltransferase (491 aa).

Met-1 carries the post-translational modification N-acetylmethionine. Tyr-188 is modified (phosphotyrosine). Arg-196 lines the diphosphate pocket. Asp-219 provides a ligand contact to beta-nicotinamide D-ribonucleotide. Positions 247 and 311 each coordinate diphosphate. Residues Arg-311–Asp-313, Gly-353–Asp-354, Gly-384, and Arg-392 contribute to the beta-nicotinamide D-ribonucleotide site. Ser-472 carries the post-translational modification Phosphoserine.

Belongs to the NAPRTase family. In terms of assembly, homodimer. In terms of tissue distribution, ubiquitously expressed in lymphoid and non-lymphoid tissues.

It is found in the nucleus. Its subcellular location is the cytoplasm. It localises to the secreted. The catalysed reaction is beta-nicotinamide D-ribonucleotide + diphosphate = 5-phospho-alpha-D-ribose 1-diphosphate + nicotinamide + H(+). It functions in the pathway cofactor biosynthesis; NAD(+) biosynthesis; nicotinamide D-ribonucleotide from 5-phospho-alpha-D-ribose 1-diphosphate and nicotinamide: step 1/1. Functionally, the secreted form behaves both as a cytokine with immunomodulating properties and an adipokine with anti-diabetic properties, it has no enzymatic activity, partly because of lack of activation by ATP, which has a low level in extracellular space and plasma. Catalyzes the condensation of nicotinamide with 5-phosphoribosyl-1-pyrophosphate to yield nicotinamide mononucleotide, an intermediate in the biosynthesis of NAD. It is the rate limiting component in the mammalian NAD biosynthesis pathway. Plays a role in the modulation of circadian clock function. NAMPT-dependent oscillatory production of NAD regulates oscillation of clock target gene expression by releasing the core clock component: CLOCK-BMAL1 heterodimer from NAD-dependent SIRT1-mediated suppression. This Mus musculus (Mouse) protein is Nicotinamide phosphoribosyltransferase (Nampt).